The chain runs to 365 residues: Histidinol-phosphate aminotransferase (365 aa).

An N6-(pyridoxal phosphate)lysine modification is found at Lys220.

It belongs to the class-II pyridoxal-phosphate-dependent aminotransferase family. Histidinol-phosphate aminotransferase subfamily. As to quaternary structure, homodimer. It depends on pyridoxal 5'-phosphate as a cofactor.

The enzyme catalyses L-histidinol phosphate + 2-oxoglutarate = 3-(imidazol-4-yl)-2-oxopropyl phosphate + L-glutamate. Its pathway is amino-acid biosynthesis; L-histidine biosynthesis; L-histidine from 5-phospho-alpha-D-ribose 1-diphosphate: step 7/9. The sequence is that of Histidinol-phosphate aminotransferase (hisC) from Xylella fastidiosa (strain Temecula1 / ATCC 700964).